A 522-amino-acid polypeptide reads, in one-letter code: Glutathione reductase, mitochondrial (522 aa).

The transit peptide at 1-43 (MALLPRALSAGAGPSWRRAARAFRGFLLLLPEPAALTRALSRA) directs the protein to the mitochondrion. Positions 74 and 75 each coordinate FAD. Ser-74 is a glutathione binding site. Arg-81 is a glutathione binding site. Residue Glu-94 participates in FAD binding. Lys-97 is modified (N6-acetyllysine). 3 residues coordinate FAD: Thr-101, Cys-102, and Lys-110. A disulfide bridge links Cys-102 with Cys-107. Residue Tyr-158 participates in glutathione binding. Ala-174 contributes to the FAD binding site. NADP(+) contacts are provided by Ala-239, Ile-242, Glu-245, Arg-262, Arg-268, and Gly-334. Residue Asp-375 coordinates FAD. Leu-381 contacts NADP(+). Residue Thr-383 coordinates FAD. Arg-391 is a binding site for glutathione. An NADP(+)-binding site is contributed by Val-414. His-511 contributes to the FAD binding site. His-511 serves as the catalytic Proton acceptor.

The protein belongs to the class-I pyridine nucleotide-disulfide oxidoreductase family. In terms of assembly, homodimer; disulfide-linked. FAD serves as cofactor.

The protein localises to the mitochondrion. The protein resides in the cytoplasm. It carries out the reaction 2 glutathione + NADP(+) = glutathione disulfide + NADPH + H(+). In terms of biological role, catalyzes the reduction of glutathione disulfide (GSSG) to reduced glutathione (GSH). Constitutes the major mechanism to maintain a high GSH:GSSG ratio in the cytosol. The protein is Glutathione reductase, mitochondrial (GSR) of Homo sapiens (Human).